Reading from the N-terminus, the 341-residue chain is Glycerol-3-phosphate dehydrogenase [NAD(P)+] (341 aa).

Residues serine 14, phenylalanine 15, arginine 35, and lysine 108 each contribute to the NADPH site. Residues lysine 108 and glycine 136 each contribute to the sn-glycerol 3-phosphate site. Alanine 140 provides a ligand contact to NADPH. Sn-glycerol 3-phosphate is bound by residues lysine 191, aspartate 244, serine 254, arginine 255, and asparagine 256. The active-site Proton acceptor is the lysine 191. Residue arginine 255 participates in NADPH binding. 2 residues coordinate NADPH: valine 279 and glutamate 281.

It belongs to the NAD-dependent glycerol-3-phosphate dehydrogenase family.

Its subcellular location is the cytoplasm. It catalyses the reaction sn-glycerol 3-phosphate + NAD(+) = dihydroxyacetone phosphate + NADH + H(+). It carries out the reaction sn-glycerol 3-phosphate + NADP(+) = dihydroxyacetone phosphate + NADPH + H(+). It participates in membrane lipid metabolism; glycerophospholipid metabolism. Functionally, catalyzes the reduction of the glycolytic intermediate dihydroxyacetone phosphate (DHAP) to sn-glycerol 3-phosphate (G3P), the key precursor for phospholipid synthesis. The chain is Glycerol-3-phosphate dehydrogenase [NAD(P)+] from Pseudomonas syringae pv. syringae (strain B728a).